The primary structure comprises 118 residues: Nitrogenase-stabilizing/protective protein NifW (118 aa).

It belongs to the NifW family. Homotrimer; associates with NifD.

May protect the nitrogenase Fe-Mo protein from oxidative damage. This is Nitrogenase-stabilizing/protective protein NifW from Rhodopseudomonas palustris (strain BisB5).